Reading from the N-terminus, the 172-residue chain is Ribosome maturation factor RimM (172 aa).

One can recognise a PRC barrel domain in the interval 93–167 (DEHEFYYHEI…RVVITPIPGM (75 aa)).

The protein belongs to the RimM family. Binds ribosomal protein uS19.

Its subcellular location is the cytoplasm. Its function is as follows. An accessory protein needed during the final step in the assembly of 30S ribosomal subunit, possibly for assembly of the head region. Essential for efficient processing of 16S rRNA. May be needed both before and after RbfA during the maturation of 16S rRNA. It has affinity for free ribosomal 30S subunits but not for 70S ribosomes. The sequence is that of Ribosome maturation factor RimM from Exiguobacterium sp. (strain ATCC BAA-1283 / AT1b).